We begin with the raw amino-acid sequence, 596 residues long: Elongation factor 4 (596 aa).

Positions lysine 2 to glutamate 184 constitute a tr-type G domain. Residues aspartate 14–threonine 19 and asparagine 131–aspartate 134 each bind GTP.

It belongs to the TRAFAC class translation factor GTPase superfamily. Classic translation factor GTPase family. LepA subfamily.

The protein localises to the cell inner membrane. The enzyme catalyses GTP + H2O = GDP + phosphate + H(+). Its function is as follows. Required for accurate and efficient protein synthesis under certain stress conditions. May act as a fidelity factor of the translation reaction, by catalyzing a one-codon backward translocation of tRNAs on improperly translocated ribosomes. Back-translocation proceeds from a post-translocation (POST) complex to a pre-translocation (PRE) complex, thus giving elongation factor G a second chance to translocate the tRNAs correctly. Binds to ribosomes in a GTP-dependent manner. This Shewanella putrefaciens (strain CN-32 / ATCC BAA-453) protein is Elongation factor 4.